The sequence spans 494 residues: DnaJ-related protein rsp1 (494 aa).

In terms of domain architecture, J spans 12 to 78 (DYYTILGAES…KLRELFDQRR (67 aa)). Positions 229–242 (SEISNGLNSNGVEN) are enriched in polar residues. The interval 229-354 (SEISNGLNSN…NDSTSNSTEY (126 aa)) is disordered. Low complexity predominate over residues 243-256 (SSITKSSPRSSSSS). The segment covering 270-287 (IFTSPNTPEHPSVYQTDI) has biased composition (polar residues). A compositionally biased stretch (low complexity) spans 321-331 (LSRSKSSSLSR). The span at 332–354 (NQTRSQLNDLSAENDSTSNSTEY) shows a compositional bias: polar residues.

Interacts iwth ssa1.

It localises to the cytoplasm. The protein localises to the cytoskeleton. The protein resides in the nucleus. Has a role in the proper organization of the interphase microtubule cytoskeleton. Required for equatorial microtubule organizing center (eMTOC) disassembly into satellites, contributing to the dynamic redistribution of MTOC components for organization of interphase microtubules. This is DnaJ-related protein rsp1 (rsp1) from Schizosaccharomyces pombe (strain 972 / ATCC 24843) (Fission yeast).